A 589-amino-acid chain; its full sequence is Aspartate--tRNA ligase (589 aa).

Residue glutamate 171 participates in L-aspartate binding. The tract at residues 195-198 is aspartate; that stretch reads QLFK. Position 217 (arginine 217) interacts with L-aspartate. Residues 217 to 219 and glutamine 226 each bind ATP; that span reads RDE. Residue histidine 448 coordinates L-aspartate. Glutamate 482 provides a ligand contact to ATP. Residue arginine 489 participates in L-aspartate binding. ATP is bound at residue 534 to 537; the sequence is GLDR.

This sequence belongs to the class-II aminoacyl-tRNA synthetase family. Type 1 subfamily. Homodimer.

It localises to the cytoplasm. It carries out the reaction tRNA(Asp) + L-aspartate + ATP = L-aspartyl-tRNA(Asp) + AMP + diphosphate. Catalyzes the attachment of L-aspartate to tRNA(Asp) in a two-step reaction: L-aspartate is first activated by ATP to form Asp-AMP and then transferred to the acceptor end of tRNA(Asp). This Idiomarina loihiensis (strain ATCC BAA-735 / DSM 15497 / L2-TR) protein is Aspartate--tRNA ligase.